Reading from the N-terminus, the 209-residue chain is Kinetochore protein Spc25 (209 aa).

The stretch at Thr74–Asp107 forms a coiled coil.

It belongs to the SPC25 family. Component of the Ndc80 complex, which is composed of Ndc80, Nuf2 and Spc25.

It is found in the nucleus. The protein localises to the chromosome. It localises to the centromere. Its subcellular location is the kinetochore. In terms of biological role, acts as a component of the essential kinetochore-associated Ndc80 complex, which is required for chromosome segregation and spindle checkpoint activity during meiosis and mitosis. Required for kinetochore integrity and the organization of stable microtubule binding sites in the outer plate of the kinetochore. Participates in SAC signaling that responds specifically to disruptions in spindle microtubule dynamics. The NDC80 complex synergistically enhances the affinity of the SKA1 complex for microtubules and may allow the NDC80 complex to track depolymerizing microtubules. This is Kinetochore protein Spc25 from Drosophila grimshawi (Hawaiian fruit fly).